A 656-amino-acid polypeptide reads, in one-letter code: Chaperone protein HtpG (656 aa).

The segment at 1 to 359 (MSAQVEQLEF…AEDMSLNVSR (359 aa)) is a; substrate-binding. Positions 360-575 (EILQQNRQIN…AFGITPALAR (216 aa)) are b. The segment at 576–656 (IYRASGQDVP…LLADLLSRSM (81 aa)) is c.

Belongs to the heat shock protein 90 family. As to quaternary structure, homodimer.

Its subcellular location is the cytoplasm. Its function is as follows. Molecular chaperone. Has ATPase activity. The sequence is that of Chaperone protein HtpG from Mycobacterium leprae (strain TN).